The primary structure comprises 110 residues: UPF0060 membrane protein PBPRB0495 (110 aa).

4 helical membrane passes run 7 to 27 (VGLF…PYLW), 33 to 53 (TIWL…LLTL), 63 to 83 (AAYG…VDGI), and 85 to 105 (PTVW…IIMF).

The protein belongs to the UPF0060 family.

Its subcellular location is the cell inner membrane. The chain is UPF0060 membrane protein PBPRB0495 from Photobacterium profundum (strain SS9).